The following is a 152-amino-acid chain: D-aminoacyl-tRNA deacylase (152 aa).

Residues 142–143 carry the Gly-cisPro motif, important for rejection of L-amino acids motif; that stretch reads GP.

Belongs to the DTD family. In terms of assembly, homodimer.

The protein resides in the cytoplasm. The catalysed reaction is glycyl-tRNA(Ala) + H2O = tRNA(Ala) + glycine + H(+). It catalyses the reaction a D-aminoacyl-tRNA + H2O = a tRNA + a D-alpha-amino acid + H(+). Its function is as follows. An aminoacyl-tRNA editing enzyme that deacylates mischarged D-aminoacyl-tRNAs. Also deacylates mischarged glycyl-tRNA(Ala), protecting cells against glycine mischarging by AlaRS. Acts via tRNA-based rather than protein-based catalysis; rejects L-amino acids rather than detecting D-amino acids in the active site. By recycling D-aminoacyl-tRNA to D-amino acids and free tRNA molecules, this enzyme counteracts the toxicity associated with the formation of D-aminoacyl-tRNA entities in vivo and helps enforce protein L-homochirality. The chain is D-aminoacyl-tRNA deacylase from Paraburkholderia phymatum (strain DSM 17167 / CIP 108236 / LMG 21445 / STM815) (Burkholderia phymatum).